Here is a 286-residue protein sequence, read N- to C-terminus: Bifunctional protein FolD 2 (286 aa).

NADP(+) contacts are provided by residues 165–167 (GRG), T192, and V233.

The protein belongs to the tetrahydrofolate dehydrogenase/cyclohydrolase family. As to quaternary structure, homodimer.

It catalyses the reaction (6R)-5,10-methylene-5,6,7,8-tetrahydrofolate + NADP(+) = (6R)-5,10-methenyltetrahydrofolate + NADPH. The catalysed reaction is (6R)-5,10-methenyltetrahydrofolate + H2O = (6R)-10-formyltetrahydrofolate + H(+). It functions in the pathway one-carbon metabolism; tetrahydrofolate interconversion. In terms of biological role, catalyzes the oxidation of 5,10-methylenetetrahydrofolate to 5,10-methenyltetrahydrofolate and then the hydrolysis of 5,10-methenyltetrahydrofolate to 10-formyltetrahydrofolate. In Rhodococcus jostii (strain RHA1), this protein is Bifunctional protein FolD 2.